A 360-amino-acid polypeptide reads, in one-letter code: 3-dehydroquinate synthase (360 aa).

NAD(+) is bound by residues 72 to 77 (DGEEYK), 106 to 110 (GVIGD), 130 to 131 (TT), lysine 143, and lysine 152. Glutamate 185, histidine 248, and histidine 265 together coordinate Zn(2+).

The protein belongs to the sugar phosphate cyclases superfamily. Dehydroquinate synthase family. It depends on Co(2+) as a cofactor. Requires Zn(2+) as cofactor. The cofactor is NAD(+).

The protein resides in the cytoplasm. It catalyses the reaction 7-phospho-2-dehydro-3-deoxy-D-arabino-heptonate = 3-dehydroquinate + phosphate. It functions in the pathway metabolic intermediate biosynthesis; chorismate biosynthesis; chorismate from D-erythrose 4-phosphate and phosphoenolpyruvate: step 2/7. Its function is as follows. Catalyzes the conversion of 3-deoxy-D-arabino-heptulosonate 7-phosphate (DAHP) to dehydroquinate (DHQ). The chain is 3-dehydroquinate synthase from Geotalea uraniireducens (strain Rf4) (Geobacter uraniireducens).